The following is a 79-amino-acid chain: Large ribosomal subunit protein uL24 (79 aa).

This sequence belongs to the universal ribosomal protein uL24 family. In terms of assembly, part of the 50S ribosomal subunit.

Functionally, one of two assembly initiator proteins, it binds directly to the 5'-end of the 23S rRNA, where it nucleates assembly of the 50S subunit. In terms of biological role, one of the proteins that surrounds the polypeptide exit tunnel on the outside of the subunit. The sequence is that of Large ribosomal subunit protein uL24 from Lactobacillus gasseri (strain ATCC 33323 / DSM 20243 / BCRC 14619 / CIP 102991 / JCM 1131 / KCTC 3163 / NCIMB 11718 / NCTC 13722 / AM63).